A 105-amino-acid chain; its full sequence is uncharacterized protein (105 aa).

This is an uncharacterized protein from Fowlpox virus (strain NVSL) (FPV).